The sequence spans 145 residues: Basic phospholipase A2 S6-45 (145 aa).

Residues 1-19 (MYPAHLLVLLAVCVSLLGA) form the signal peptide. The propeptide occupies 20–27 (SDIPPQPL). 7 disulfide bridges follow: Cys-38–Cys-99, Cys-54–Cys-144, Cys-56–Cys-72, Cys-71–Cys-127, Cys-78–Cys-120, Cys-88–Cys-113, and Cys-106–Cys-118. Ca(2+) is bound by residues Tyr-55, Gly-57, and Gly-59. Residue His-75 is part of the active site. Asp-76 is a binding site for Ca(2+). Residue Asp-121 is part of the active site.

Belongs to the phospholipase A2 family. Group I subfamily. D49 sub-subfamily. Requires Ca(2+) as cofactor. In terms of tissue distribution, expressed by the venom gland.

The protein resides in the secreted. It catalyses the reaction a 1,2-diacyl-sn-glycero-3-phosphocholine + H2O = a 1-acyl-sn-glycero-3-phosphocholine + a fatty acid + H(+). In terms of biological role, snake venom phospholipase A2 (PLA2) that inhibits collagen-induced platelet aggregation. PLA2 catalyzes the calcium-dependent hydrolysis of the 2-acyl groups in 3-sn-phosphoglycerides. In Austrelaps superbus (Lowland copperhead snake), this protein is Basic phospholipase A2 S6-45.